Reading from the N-terminus, the 390-residue chain is 2-oxoisovalerate dehydrogenase subunit beta, mitochondrial (390 aa).

A mitochondrion-targeting transit peptide spans 1 to 48 (MAAVAARAGGLLWLRAAGAERRRCGLRCAALVQGFLQPGGEDTAQKRR). Tyrosine 150 contributes to the thiamine diphosphate binding site. Positions 176, 178, 179, 226, and 229 each coordinate K(+). Lysine 230 is modified (N6-acetyllysine). A K(+)-binding site is contributed by asparagine 231. Lysine 239 bears the N6-acetyllysine mark.

Heterotetramer of 2 alpha/BCKDHA and 2 beta chains/BCKDHB that forms the branched-chain alpha-keto acid decarboxylase (E1) component of the BCKD complex. The branched-chain alpha-ketoacid dehydrogenase is a large complex composed of three major building blocks E1, E2 and E3. It is organized around E2, a 24-meric cubic core composed of DBT, to which are associated 6 to 12 copies of E1, and approximately 6 copies of the dehydrogenase E3, a DLD dimer. It depends on thiamine diphosphate as a cofactor.

The protein localises to the mitochondrion matrix. It catalyses the reaction N(6)-[(R)-lipoyl]-L-lysyl-[protein] + 3-methyl-2-oxobutanoate + H(+) = N(6)-[(R)-S(8)-2-methylpropanoyldihydrolipoyl]-L-lysyl-[protein] + CO2. Its function is as follows. Together with BCKDHA forms the heterotetrameric E1 subunit of the mitochondrial branched-chain alpha-ketoacid dehydrogenase (BCKD) complex. The BCKD complex catalyzes the multi-step oxidative decarboxylation of alpha-ketoacids derived from the branched-chain amino-acids valine, leucine and isoleucine producing CO2 and acyl-CoA which is subsequently utilized to produce energy. The E1 subunit catalyzes the first step with the decarboxylation of the alpha-ketoacid forming an enzyme-product intermediate. A reductive acylation mediated by the lipoylamide cofactor of E2 extracts the acyl group from the E1 active site for the next step of the reaction. This Mus musculus (Mouse) protein is 2-oxoisovalerate dehydrogenase subunit beta, mitochondrial.